Consider the following 303-residue polypeptide: Methionyl-tRNA formyltransferase (303 aa).

110–113 (SLLP) provides a ligand contact to (6S)-5,6,7,8-tetrahydrofolate.

This sequence belongs to the Fmt family.

It carries out the reaction L-methionyl-tRNA(fMet) + (6R)-10-formyltetrahydrofolate = N-formyl-L-methionyl-tRNA(fMet) + (6S)-5,6,7,8-tetrahydrofolate + H(+). Attaches a formyl group to the free amino group of methionyl-tRNA(fMet). The formyl group appears to play a dual role in the initiator identity of N-formylmethionyl-tRNA by promoting its recognition by IF2 and preventing the misappropriation of this tRNA by the elongation apparatus. This Ehrlichia ruminantium (strain Gardel) protein is Methionyl-tRNA formyltransferase.